The chain runs to 315 residues: Cytochrome c biogenesis protein CcsA (315 aa).

7 helical membrane passes run 17-37, 72-92, 101-121, 146-166, 221-241, 255-272, and 282-302; these read LGFAAFLFLLMALPISFWAVA, ISNLYESLCFLTWGCTLAQLF, IVSAVATPVSLLSIGFASFVL, VIMCSYAALLIGSILSFGVFL, SITAGFLLLTVGLISGAVWAN, TWALICWLVYAAYLHTRI, and AILAIAGFFVIIVCYIGVNLL.

It belongs to the CcmF/CycK/Ccl1/NrfE/CcsA family. In terms of assembly, may interact with ccs1.

It localises to the cellular thylakoid membrane. Its function is as follows. Required during biogenesis of c-type cytochromes (cytochrome c6 and cytochrome f) at the step of heme attachment. In Prochlorococcus marinus (strain NATL2A), this protein is Cytochrome c biogenesis protein CcsA.